A 161-amino-acid polypeptide reads, in one-letter code: SsrA-binding protein (161 aa).

Belongs to the SmpB family.

The protein resides in the cytoplasm. In terms of biological role, required for rescue of stalled ribosomes mediated by trans-translation. Binds to transfer-messenger RNA (tmRNA), required for stable association of tmRNA with ribosomes. tmRNA and SmpB together mimic tRNA shape, replacing the anticodon stem-loop with SmpB. tmRNA is encoded by the ssrA gene; the 2 termini fold to resemble tRNA(Ala) and it encodes a 'tag peptide', a short internal open reading frame. During trans-translation Ala-aminoacylated tmRNA acts like a tRNA, entering the A-site of stalled ribosomes, displacing the stalled mRNA. The ribosome then switches to translate the ORF on the tmRNA; the nascent peptide is terminated with the 'tag peptide' encoded by the tmRNA and targeted for degradation. The ribosome is freed to recommence translation, which seems to be the essential function of trans-translation. In Vibrio campbellii (strain ATCC BAA-1116), this protein is SsrA-binding protein.